The primary structure comprises 240 residues: Protein UL136 (240 aa).

A helical membrane pass occupies residues 69 to 89; that stretch reads VICAVLLTLMIMAIGALIAYL. Disordered stretches follow at residues 119–142 and 164–199; these read ERQR…ARRP and TRPA…PATR.

This sequence belongs to the HHV-5 UL136 protein family. In terms of assembly, interacts with host ATP1B1.

It is found in the host membrane. The chain is Protein UL136 (UL136) from Human cytomegalovirus (strain Towne) (HHV-5).